The primary structure comprises 557 residues: Acid-sensing ion channel 1B (557 aa).

Topologically, residues 1-98 are cytoplasmic; that stretch reads MVRITCTISF…SIRQGLWALV (98 aa). Over residues 36–45 the composition is skewed to basic and acidic residues; the sequence is KDGEQGKYQE. The disordered stretch occupies residues 36-57; sequence KDGEQGKYQEEGDDPDAYDGPE. Residues 46–57 are compositionally biased toward acidic residues; the sequence is EGDDPDAYDGPE. Residues 99–115 form a helical membrane-spanning segment; that stretch reads FLLAISMFLLQVVDRVI. Residues 116–460 lie on the Extracellular side of the membrane; it reads YYLQYDYVTL…ETIEQKKAYE (345 aa). N-linked (GlcNAc...) asparagine glycosylation is found at Asn-133 and Asn-194. Cystine bridges form between Cys-142–Cys-229, Cys-207–Cys-214, Cys-325–Cys-400, Cys-343–Cys-396, Cys-347–Cys-394, Cys-356–Cys-378, and Cys-358–Cys-370. N-linked (GlcNAc...) asparagine glycans are attached at residues Asn-401 and Asn-428. A discontinuously helical membrane pass occupies residues 461 to 491; sequence LAGLLGDIGGQMGLFIGASILTILELFDYLY. The short motif at 477–479 is the GAS motif; ion selectivity filter element; that stretch reads GAS. The Cytoplasmic segment spans residues 492–557; the sequence is EVIKFKLCRC…GQGNFEDFTC (66 aa).

This sequence belongs to the amiloride-sensitive sodium channel (TC 1.A.6) family. ASIC1 subfamily. Homotrimer. Heterotrimer; with other ASIC proteins producing channel with different properties. Expressed in central nervous system.

The protein localises to the cell membrane. It is found in the postsynaptic cell membrane. Its subcellular location is the cell projection. It localises to the dendrite. It carries out the reaction Na(+)(in) = Na(+)(out). The catalysed reaction is K(+)(in) = K(+)(out). It catalyses the reaction Li(+)(in) = Li(+)(out). The enzyme catalyses Ca(2+)(in) = Ca(2+)(out). Its activity is regulated as follows. Inhibited by the diuretic drug amiloride. Forms voltage-independent, pH-gated trimeric sodium channels that act as postsynaptic excitatory receptors in the nervous system, playing a crucial role in regulating synaptic plasticity, learning, and memory. Upon extracellular pH drop this channel elicits transient, fast activating, and completely desensitizing inward currents. Displays high selectivity for sodium ions but can also permit the permeation of other cations. This Danio rerio (Zebrafish) protein is Acid-sensing ion channel 1B (asic1b).